We begin with the raw amino-acid sequence, 120 residues long: Large ribosomal subunit protein bL12 (120 aa).

The protein belongs to the bacterial ribosomal protein bL12 family. In terms of assembly, homodimer. Part of the ribosomal stalk of the 50S ribosomal subunit. Forms a multimeric L10(L12)X complex, where L10 forms an elongated spine to which 2 to 4 L12 dimers bind in a sequential fashion. Binds GTP-bound translation factors.

Functionally, forms part of the ribosomal stalk which helps the ribosome interact with GTP-bound translation factors. Is thus essential for accurate translation. In Lactobacillus helveticus (strain DPC 4571), this protein is Large ribosomal subunit protein bL12.